Reading from the N-terminus, the 303-residue chain is Ribosomal RNA small subunit methyltransferase H (303 aa).

Residues 36-38, D55, F81, D101, and Q108 each bind S-adenosyl-L-methionine; that span reads CGH.

The protein belongs to the methyltransferase superfamily. RsmH family.

The protein resides in the cytoplasm. It carries out the reaction cytidine(1402) in 16S rRNA + S-adenosyl-L-methionine = N(4)-methylcytidine(1402) in 16S rRNA + S-adenosyl-L-homocysteine + H(+). Its function is as follows. Specifically methylates the N4 position of cytidine in position 1402 (C1402) of 16S rRNA. The protein is Ribosomal RNA small subunit methyltransferase H of Aster yellows witches'-broom phytoplasma (strain AYWB).